The following is a 352-amino-acid chain: Uroporphyrinogen decarboxylase (352 aa).

Residues 29–33 (RQAGR), phenylalanine 48, aspartate 78, tyrosine 154, serine 209, and histidine 322 contribute to the substrate site.

This sequence belongs to the uroporphyrinogen decarboxylase family. As to quaternary structure, homodimer.

It localises to the cytoplasm. The catalysed reaction is uroporphyrinogen III + 4 H(+) = coproporphyrinogen III + 4 CO2. Its pathway is porphyrin-containing compound metabolism; protoporphyrin-IX biosynthesis; coproporphyrinogen-III from 5-aminolevulinate: step 4/4. In terms of biological role, catalyzes the decarboxylation of four acetate groups of uroporphyrinogen-III to yield coproporphyrinogen-III. The chain is Uroporphyrinogen decarboxylase from Bacillus pumilus (strain SAFR-032).